The sequence spans 119 residues: Large ribosomal subunit protein bL20c (119 aa).

Belongs to the bacterial ribosomal protein bL20 family.

Its subcellular location is the plastid. The protein localises to the chloroplast. Its function is as follows. Binds directly to 23S ribosomal RNA and is necessary for the in vitro assembly process of the 50S ribosomal subunit. It is not involved in the protein synthesizing functions of that subunit. This is Large ribosomal subunit protein bL20c from Triticum aestivum (Wheat).